The following is a 559-amino-acid chain: Beta-glucuronidase (559 aa).

Residues 1–19 (MKRILGLIAYASVPTVINA) form the signal peptide. N53, N91, N99, and N143 each carry an N-linked (GlcNAc...) asparagine glycan. E194 serves as the catalytic Proton donor. N-linked (GlcNAc...) asparagine glycosylation is found at N203, N222, and N280. Residue E312 is the Nucleophile of the active site. N-linked (GlcNAc...) asparagine glycans are attached at residues N427, N440, N465, N491, and N520.

This sequence belongs to the glycosyl hydrolase 79 family.

Its subcellular location is the secreted. The catalysed reaction is a beta-D-glucuronoside + H2O = D-glucuronate + an alcohol. Functionally, beta-glucuronidase that hydrolyzes beta-glucuronosyl and 4-O-methyl-beta-glucuronosyl residues of arabinogalactan-protein. Hydrolyzed heparan sulfate only very weakly. Has no activity on xylan from birchwood. Able to catalyze the transglycosylation of glucuronic acid (GlcA) residues from p-nitrophenyl-beta-glucuronic acid (PNP beta-GlcA) to various monosaccharide acceptors such as glucose, galactose and xylose. The sequence is that of Beta-glucuronidase from Neurospora crassa (strain ATCC 24698 / 74-OR23-1A / CBS 708.71 / DSM 1257 / FGSC 987).